The chain runs to 348 residues: ELAV-like protein 3 (348 aa).

3 RRM domains span residues 34 to 112 (TNLI…YARP), 120 to 200 (ANLY…FANN), and 265 to 343 (WCIF…FKTS).

It belongs to the RRM elav family. In terms of tissue distribution, expression is neural-specific in both embryos and adults. Expressed from neurula stage onwards in primary motor-, inter- and sensory-neurons. Expressed in the closing neural tube and motor neurons of stage 18 embryos, and primarily in the ventricular zone and dorsal region of the tailbud and adult brain. Expressed from stage 26 onwards in the differentiating ganglion cell layer of the retina, extending to the inner nuclear layer at later stages.

RNA-binding protein that binds to AU-rich element (ARE) sequences of target mRNAs. May also bind poly-A tracts via RRM 3. May be involved in neuronal differentiation and maintenance. The protein is ELAV-like protein 3 (elavl3) of Xenopus laevis (African clawed frog).